A 292-amino-acid polypeptide reads, in one-letter code: NAD kinase (292 aa).

The active-site Proton acceptor is D73. Residues 73 to 74 (DG), 147 to 148 (NE), H158, R175, D177, 188 to 193 (TAYSLS), and Q247 each bind NAD(+).

This sequence belongs to the NAD kinase family. Requires a divalent metal cation as cofactor.

The protein resides in the cytoplasm. It carries out the reaction NAD(+) + ATP = ADP + NADP(+) + H(+). Functionally, involved in the regulation of the intracellular balance of NAD and NADP, and is a key enzyme in the biosynthesis of NADP. Catalyzes specifically the phosphorylation on 2'-hydroxyl of the adenosine moiety of NAD to yield NADP. The protein is NAD kinase of Escherichia coli (strain SMS-3-5 / SECEC).